Reading from the N-terminus, the 548-residue chain is uncharacterized protein (548 aa).

Positions 8–200 (KLFADMIIQG…LLCVYEGFLK (193 aa)) constitute a DhaL domain.

This is an uncharacterized protein from Staphylococcus aureus (strain MRSA252).